We begin with the raw amino-acid sequence, 643 residues long: Thioredoxin reductase 3 (643 aa).

A disordered region spans residues 1–53; it reads MERSPPQSPGPGKAGDAPNRRSGHVRGARVLSPPGRRARLSSPGPSRSSEARE. Arginine 26 carries the asymmetric dimethylarginine; alternate modification. An Omega-N-methylarginine; alternate modification is found at arginine 26. Phosphoserine is present on residues serine 41 and serine 42. A Glutaredoxin domain is found at 56–156; the sequence is RRHLVGLIER…KLLQEDLAYD (101 aa). 158–187 contacts FAD; the sequence is DLIIIGGGSGGLSCAKEAAILGKKVMVLDF. A disulfide bridge links cysteine 203 with cysteine 208. At lysine 379 the chain carries N6-succinyllysine. The Proton acceptor role is filled by histidine 616. The segment at residues 641–642 is a cross-link (cysteinyl-selenocysteine (Cys-Sec)); that stretch reads CU. Selenocysteine 642 is a non-standard amino acid (selenocysteine).

This sequence belongs to the class-I pyridine nucleotide-disulfide oxidoreductase family. As to quaternary structure, homodimer. FAD is required as a cofactor.

Its subcellular location is the cytoplasm. It is found in the nucleus. It localises to the microsome. The protein resides in the endoplasmic reticulum. The enzyme catalyses [thioredoxin]-dithiol + NADP(+) = [thioredoxin]-disulfide + NADPH + H(+). Functionally, displays thioredoxin reductase, glutaredoxin and glutathione reductase activities. Catalyzes disulfide bond isomerization. Promotes disulfide bond formation between GPX4 and various sperm proteins and may play a role in sperm maturation by promoting formation of sperm structural components. This Homo sapiens (Human) protein is Thioredoxin reductase 3.